Consider the following 343-residue polypeptide: Ion-translocating oxidoreductase complex subunit D (343 aa).

A run of 4 helical transmembrane segments spans residues 24–44, 45–65, 69–91, and 124–144; these read VLLA…AGTL, YNLA…LAAR, LAFF…ALPP, and AMLG…SWPA. At Thr-171 the chain carries FMN phosphoryl threonine. 5 helical membrane passes run 197 to 217, 221 to 241, 251 to 271, 284 to 304, and 305 to 325; these read FGGA…LYLL, LITW…SLLF, GSPL…FIVT, LVFG…GGYP, and DAVA…DYYT.

The protein belongs to the NqrB/RnfD family. In terms of assembly, the complex is composed of six subunits: RnfA, RnfB, RnfC, RnfD, RnfE and RnfG. FMN serves as cofactor.

It is found in the cell inner membrane. Functionally, part of a membrane-bound complex that couples electron transfer with translocation of ions across the membrane. This chain is Ion-translocating oxidoreductase complex subunit D, found in Ectopseudomonas mendocina (strain ymp) (Pseudomonas mendocina).